Reading from the N-terminus, the 328-residue chain is Stress response kinase A (328 aa).

Catalysis depends on Asp-201, which acts as the Proton acceptor. Mg(2+)-binding residues include Asn-206 and Asp-217. The active site involves Asp-217.

It belongs to the SrkA/RdoA protein kinase family. Monomer. It depends on Mg(2+) as a cofactor.

It is found in the cytoplasm. It carries out the reaction L-seryl-[protein] + ATP = O-phospho-L-seryl-[protein] + ADP + H(+). It catalyses the reaction L-threonyl-[protein] + ATP = O-phospho-L-threonyl-[protein] + ADP + H(+). In terms of biological role, a protein kinase that phosphorylates Ser and Thr residues. Probably acts to suppress the effects of stress linked to accumulation of reactive oxygen species. Probably involved in the extracytoplasmic stress response. This Escherichia coli O6:H1 (strain CFT073 / ATCC 700928 / UPEC) protein is Stress response kinase A.